The primary structure comprises 437 residues: MRITQVTPLKEGFEIEIPNIASDKSISHRSAIFSLLSSSPARIHRYLQGEDTLHTLQIAQQLGLEVTKEGEGMVFTPPPSGIKEPFDVLDCGNAGTAIRLYVGLLAASKGYFVLNGDAYLRRRPMNRVVKPLQSVGAQIFGRDEGNLAPLTILGRPLAAFDYQSPIASAQVKSAMILAALQGEEASFFSEPERSRDHTERMLRGMGARIDEDQEGRLTLFPLLGKRLDPLEMTIPADPSSAFFFAVAAAIIPGARVKLQNVLLNPTRIEAFKVLESMGARLHYSITSETYETIGDIEVSHHTLQGITVSERISWLIDELPALAIAMALAQGKSRVQNAKELRVKESDRISVVVNNLRLLGVEVEEFEDGYEITGGTLQGGVTIDSHGDHRIAMSFALAGLVVPLTINDSACIDVSFPNFLEILSSIAKVIHESQTSR.

Positions 24, 25, and 29 each coordinate 3-phosphoshikimate. A phosphoenolpyruvate-binding site is contributed by lysine 24. 2 residues coordinate phosphoenolpyruvate: glycine 95 and arginine 123. Residues serine 168, glutamine 170, aspartate 317, and lysine 344 each contribute to the 3-phosphoshikimate site. Glutamine 170 contacts phosphoenolpyruvate. Aspartate 317 (proton acceptor) is an active-site residue. 2 residues coordinate phosphoenolpyruvate: arginine 348 and arginine 390.

This sequence belongs to the EPSP synthase family. As to quaternary structure, monomer.

Its subcellular location is the cytoplasm. It catalyses the reaction 3-phosphoshikimate + phosphoenolpyruvate = 5-O-(1-carboxyvinyl)-3-phosphoshikimate + phosphate. Its pathway is metabolic intermediate biosynthesis; chorismate biosynthesis; chorismate from D-erythrose 4-phosphate and phosphoenolpyruvate: step 6/7. Functionally, catalyzes the transfer of the enolpyruvyl moiety of phosphoenolpyruvate (PEP) to the 5-hydroxyl of shikimate-3-phosphate (S3P) to produce enolpyruvyl shikimate-3-phosphate and inorganic phosphate. The protein is 3-phosphoshikimate 1-carboxyvinyltransferase of Wolinella succinogenes (strain ATCC 29543 / DSM 1740 / CCUG 13145 / JCM 31913 / LMG 7466 / NCTC 11488 / FDC 602W) (Vibrio succinogenes).